The primary structure comprises 410 residues: Multifunctional CCA protein (410 aa).

ATP-binding residues include Gly-8 and Arg-11. The CTP site is built by Gly-8 and Arg-11. The Mg(2+) site is built by Glu-21 and Asp-23. 3 residues coordinate ATP: Arg-91, Arg-137, and Arg-140. Residues Arg-91, Arg-137, and Arg-140 each coordinate CTP. The HD domain maps to 228–329 (TGIHSLMALR…VKLLEQVDAF (102 aa)).

The protein belongs to the tRNA nucleotidyltransferase/poly(A) polymerase family. Bacterial CCA-adding enzyme type 1 subfamily. As to quaternary structure, monomer. Can also form homodimers and oligomers. Mg(2+) is required as a cofactor. Ni(2+) serves as cofactor.

It catalyses the reaction a tRNA precursor + 2 CTP + ATP = a tRNA with a 3' CCA end + 3 diphosphate. It carries out the reaction a tRNA with a 3' CCA end + 2 CTP + ATP = a tRNA with a 3' CCACCA end + 3 diphosphate. Catalyzes the addition and repair of the essential 3'-terminal CCA sequence in tRNAs without using a nucleic acid template. Adds these three nucleotides in the order of C, C, and A to the tRNA nucleotide-73, using CTP and ATP as substrates and producing inorganic pyrophosphate. tRNA 3'-terminal CCA addition is required both for tRNA processing and repair. Also involved in tRNA surveillance by mediating tandem CCA addition to generate a CCACCA at the 3' terminus of unstable tRNAs. While stable tRNAs receive only 3'-terminal CCA, unstable tRNAs are marked with CCACCA and rapidly degraded. This chain is Multifunctional CCA protein, found in Legionella pneumophila (strain Paris).